The primary structure comprises 210 residues: Orotate phosphoribosyltransferase (210 aa).

Lys-26 serves as a coordination point for 5-phospho-alpha-D-ribose 1-diphosphate. 34–35 serves as a coordination point for orotate; sequence FF. 5-phospho-alpha-D-ribose 1-diphosphate is bound by residues 72-73, Arg-98, Lys-99, Lys-102, His-104, and 123-131; these read YK and DDVITAGTA. Thr-127 and Arg-155 together coordinate orotate.

Belongs to the purine/pyrimidine phosphoribosyltransferase family. PyrE subfamily. In terms of assembly, homodimer. Mg(2+) is required as a cofactor.

It catalyses the reaction orotidine 5'-phosphate + diphosphate = orotate + 5-phospho-alpha-D-ribose 1-diphosphate. It functions in the pathway pyrimidine metabolism; UMP biosynthesis via de novo pathway; UMP from orotate: step 1/2. Functionally, catalyzes the transfer of a ribosyl phosphate group from 5-phosphoribose 1-diphosphate to orotate, leading to the formation of orotidine monophosphate (OMP). This chain is Orotate phosphoribosyltransferase, found in Legionella pneumophila (strain Paris).